We begin with the raw amino-acid sequence, 469 residues long: Type II secretion system protein HxcR (469 aa).

Residue 246–253 participates in ATP binding; sequence GPTGSGKT.

Belongs to the GSP E family.

The protein localises to the cytoplasm. The catalysed reaction is ATP + H2O + cellular proteinSide 1 = ADP + phosphate + cellular proteinSide 2.. Its function is as follows. ATPase component of the type II secretion system required for the energy-dependent secretion of extracellular factors from the periplasm. Acts as a molecular motor to provide the energy that is required for the export of proteins. The Hxc system is involved in the secretion of low-molecular-weight alkaline phosphatase L-AP (LapA). Is probably also involved in the secretion of the phosphate-binding protein PstS. This is Type II secretion system protein HxcR from Pseudomonas aeruginosa (strain ATCC 15692 / DSM 22644 / CIP 104116 / JCM 14847 / LMG 12228 / 1C / PRS 101 / PAO1).